Reading from the N-terminus, the 163-residue chain is Glutathione peroxidase 1 (163 aa).

C36 is a catalytic residue.

It belongs to the glutathione peroxidase family.

It localises to the cytoplasm. The catalysed reaction is 2 glutathione + H2O2 = glutathione disulfide + 2 H2O. In terms of biological role, may constitute a glutathione peroxidase-like protective system against oxidative stresses. In Caenorhabditis elegans, this protein is Glutathione peroxidase 1 (gpx-1).